The sequence spans 185 residues: Cuticle protein 18.6, isoform A (185 aa).

7 consecutive repeat copies span residues alanine 21–alanine 24, alanine 33–valine 36, alanine 41–valine 44, alanine 54–alanine 57, alanine 133–valine 136, alanine 139–valine 142, and alanine 150–valine 153. In terms of domain architecture, Chitin-binding type R&amp;R spans histidine 64–alanine 134.

In terms of biological role, component of the cuticle of migratory locust which contains more than 100 different structural proteins. This Locusta migratoria (Migratory locust) protein is Cuticle protein 18.6, isoform A.